The primary structure comprises 964 residues: Protein HIRA (964 aa).

WD repeat units lie at residues 10 to 50, 64 to 103, 123 to 162, 165 to 204, 259 to 331, and 335 to 376; these read RHEG…KDNT, DHFG…GTSE, GHTA…CTAV, GHTS…LAHK, GHNA…PLFV, and FFSQ…HRLS. Residues 453–490 form a disordered region; sequence SHEDSKKTAGPTADDVKKGNQLSSPVKQREYRRPDGRK. Residues 479–490 are compositionally biased toward basic and acidic residues; sequence KQREYRRPDGRK. A WD 7 repeat occupies 644 to 685; it reads LWSDRISGKVTVLAGNANFWAVGCEDGFLQVYTRCGVRAMPA. The stretch at 920–940 forms a coiled coil; it reads ASNRKVQRLLNEFMDLLLEYE.

It belongs to the WD repeat HIR1 family. Interacts with RS2. In terms of tissue distribution, more abundant in apices and young leaf primordia than in fully expanded leaf tissues.

Its subcellular location is the nucleus. Histone chaperone involved in maintining knox genes silencing throughout leaf development. This is Protein HIRA from Zea mays (Maize).